Reading from the N-terminus, the 504-residue chain is Heat shock 70 kDa protein 14 (504 aa).

The protein belongs to the heat shock protein 70 family. As to quaternary structure, component of ribosome-associated complex (RAC).

The protein localises to the cytoplasm. Its subcellular location is the cytosol. Component of the ribosome-associated complex (RAC), a complex involved in folding or maintaining nascent polypeptides in a folding-competent state. The sequence is that of Heat shock 70 kDa protein 14 (hspa14) from Danio rerio (Zebrafish).